Reading from the N-terminus, the 148-residue chain is Protoporphyrinogen IX oxidase (148 aa).

4 helical membrane-spanning segments follow: residues 7–27 (YFLWVKAFHVIAVISWMAALF), 59–79 (FIASPAMGFTLITGILMLLIA), 86–106 (GGWLHAKLALVVLLLIYHFYC), and 128–148 (FNEIPTILMILIVILVVVKPF). A heme-binding site is contributed by His-15. A heme-binding site is contributed by Lys-92.

It belongs to the HemJ family. In terms of assembly, homodimer. Heme b is required as a cofactor.

It localises to the cell membrane. The enzyme catalyses protoporphyrinogen IX + 3 A = protoporphyrin IX + 3 AH2. The protein operates within porphyrin-containing compound metabolism; protoporphyrin-IX biosynthesis; protoporphyrin-IX from protoporphyrinogen-IX: step 1/1. In terms of biological role, catalyzes the oxidation of protoporphyrinogen IX to protoporphyrin IX. Is involved in the biosynthesis of tetrapyrrole molecules like heme. Does not use oxygen or artificial electron acceptors such as menadione or benzoquinone. The sequence is that of Protoporphyrinogen IX oxidase from Helicobacter pylori (strain J99 / ATCC 700824) (Campylobacter pylori J99).